Here is an 853-residue protein sequence, read N- to C-terminus: DNA mismatch repair protein MutS (853 aa).

614–621 lines the ATP pocket; it reads GPNMGGKS.

The protein belongs to the DNA mismatch repair MutS family.

In terms of biological role, this protein is involved in the repair of mismatches in DNA. It is possible that it carries out the mismatch recognition step. This protein has a weak ATPase activity. This Cronobacter sakazakii (strain ATCC BAA-894) (Enterobacter sakazakii) protein is DNA mismatch repair protein MutS.